Consider the following 279-residue polypeptide: Ribosomal RNA small subunit methyltransferase A (279 aa).

Residues Asn25, Leu27, Gly52, Glu73, Asp98, and Asn120 each coordinate S-adenosyl-L-methionine.

The protein belongs to the class I-like SAM-binding methyltransferase superfamily. rRNA adenine N(6)-methyltransferase family. RsmA subfamily.

The protein resides in the cytoplasm. The catalysed reaction is adenosine(1518)/adenosine(1519) in 16S rRNA + 4 S-adenosyl-L-methionine = N(6)-dimethyladenosine(1518)/N(6)-dimethyladenosine(1519) in 16S rRNA + 4 S-adenosyl-L-homocysteine + 4 H(+). Functionally, specifically dimethylates two adjacent adenosines (A1518 and A1519) in the loop of a conserved hairpin near the 3'-end of 16S rRNA in the 30S particle. May play a critical role in biogenesis of 30S subunits. This chain is Ribosomal RNA small subunit methyltransferase A, found in Magnetococcus marinus (strain ATCC BAA-1437 / JCM 17883 / MC-1).